The primary structure comprises 459 residues: MFSLYKKFKGLFYSVLFWLCILSFFSVLNEMVLNVSLPDIANHFNTTPGITNWVNTAYMLTFSIGTAVYGKLSDYINIKKLLIIGISLSCLGSLIAFIGHNHFFILIFGRLVQGVGSAAFPSLIMVVVARNITRKKQGKAFGFIGSIVALGEGLGPSIGGIIAHYIHWSYLLILPMITIVTIPFLIKVMVPGKSTKNTLDIVGIVLMSISIICFMLFTTNYNWTFLILFTIFFVIFIKHISRVSNPFINPKLGKNIPFMLGLFSGGLIFSIVAGFISMVPYMMKTIYHVNVATIGNSVIFPGTMSVIVFGYFGGFLVDRKGSLFVFILGSLSISISFLTIAFFVEFSMWLTTFMFIFVMGGLSFTKTVISKIVSSSLSEEEVASGMSLLNFTSFLSEGTGIAIVGGLLSLQLINRKLVLEFINYSSGVYSNILVAMAILIILCCLLTIIVFKRSEKQFE.

Helical transmembrane passes span 12–34 (FYSVLFWLCILSFFSVLNEMVLN), 49–68 (GITNWVNTAYMLTFSIGTAV), 81–100 (LLIIGISLSCLGSLIAFIGH), 105–127 (ILIFGRLVQGVGSAAFPSLIMVV), 140–162 (AFGFIGSIVALGEGLGPSIGGII), 166–188 (IHWSYLLILPMITIVTIPFLIKV), 201–218 (IVGIVLMSISIICFMLFT), 223–240 (WTFLILFTIFFVIFIKHI), 261–283 (GLFSGGLIFSIVAGFISMVPYMM), 293–315 (TIGNSVIFPGTMSVIVFGYFGGF), 322–344 (SLFVFILGSLSISISFLTIAFFV), 348–370 (MWLTTFMFIFVMGGLSFTKTVIS), 391–413 (FTSFLSEGTGIAIVGGLLSLQLI), and 428–450 (VYSNILVAMAILIILCCLLTIIV).

Belongs to the major facilitator superfamily. TCR/Tet family.

The protein resides in the cell membrane. Its function is as follows. Resistance to tetracycline by an active tetracycline efflux. This is an energy-dependent process that decreases the accumulation of the antibiotic in whole cells. This protein functions as a metal-tetracycline/H(+) antiporter. The sequence is that of Tetracycline resistance protein (tet) from Staphylococcus aureus.